The chain runs to 33 residues: Photosystem II reaction center protein T (33 aa).

Residues 3–23 (ALVYTFLLVSTLGIIFFAIFF) traverse the membrane as a helical segment.

It belongs to the PsbT family. As to quaternary structure, PSII is composed of 1 copy each of membrane proteins PsbA, PsbB, PsbC, PsbD, PsbE, PsbF, PsbH, PsbI, PsbJ, PsbK, PsbL, PsbM, PsbT, PsbY, PsbZ, Psb30/Ycf12, at least 3 peripheral proteins of the oxygen-evolving complex and a large number of cofactors. It forms dimeric complexes.

It localises to the plastid. The protein localises to the chloroplast thylakoid membrane. Its function is as follows. Found at the monomer-monomer interface of the photosystem II (PS II) dimer, plays a role in assembly and dimerization of PSII. PSII is a light-driven water plastoquinone oxidoreductase, using light energy to abstract electrons from H(2)O, generating a proton gradient subsequently used for ATP formation. This is Photosystem II reaction center protein T from Asparagus officinalis (Garden asparagus).